The primary structure comprises 237 residues: Cysteine-rich venom protein DIS2 (237 aa).

Positions 1–18 are cleaved as a signal peptide; the sequence is MFVFILLSLAAVLQQSFG. Residues 37–165 form the SCP domain; that stretch reads VDKHNAFRRS…SYNYFYVCQY (129 aa). Disulfide bonds link C74–C152, C91–C166, C147–C163, C185–C192, C188–C197, C201–C234, and C219–C232. Residues 201 to 234 enclose the ShKT domain; that stretch reads CSREDVFMNCKSLVAQSNCQDDYIRKNCPATCFC.

Belongs to the CRISP family. As to expression, expressed by the venom gland.

The protein localises to the secreted. Weakly blocks contraction of smooth muscle elicited by high potassium-induced depolarization, but does not block caffeine-stimulated contraction. May target voltage-gated calcium channels on smooth muscle. This Dispholidus typus (Boomslang) protein is Cysteine-rich venom protein DIS2.